The primary structure comprises 233 residues: Zinc import ATP-binding protein ZnuC (233 aa).

The ABC transporter domain maps to Ile6 to Leu222. Gly38–Thr45 provides a ligand contact to ATP.

The protein belongs to the ABC transporter superfamily. Zinc importer (TC 3.A.1.15.5) family. In terms of assembly, the complex is composed of two ATP-binding proteins (ZnuC), two transmembrane proteins (ZnuB) and a solute-binding protein (ZnuA).

Its subcellular location is the cell inner membrane. It carries out the reaction Zn(2+)(out) + ATP(in) + H2O(in) = Zn(2+)(in) + ADP(in) + phosphate(in) + H(+)(in). In terms of biological role, part of the ABC transporter complex ZnuABC involved in zinc import. Responsible for energy coupling to the transport system. In Rickettsia conorii (strain ATCC VR-613 / Malish 7), this protein is Zinc import ATP-binding protein ZnuC.